A 618-amino-acid chain; its full sequence is Dihydroxy-acid dehydratase 1 (618 aa).

Position 81 (aspartate 81) interacts with Mg(2+). Residue cysteine 122 participates in [2Fe-2S] cluster binding. Residues aspartate 123 and lysine 124 each coordinate Mg(2+). Lysine 124 bears the N6-carboxylysine mark. Cysteine 195 is a [2Fe-2S] cluster binding site. Residue glutamate 491 participates in Mg(2+) binding. Residue serine 517 is the Proton acceptor of the active site.

The protein belongs to the IlvD/Edd family. As to quaternary structure, homodimer. [2Fe-2S] cluster serves as cofactor. It depends on Mg(2+) as a cofactor.

The enzyme catalyses (2R)-2,3-dihydroxy-3-methylbutanoate = 3-methyl-2-oxobutanoate + H2O. It carries out the reaction (2R,3R)-2,3-dihydroxy-3-methylpentanoate = (S)-3-methyl-2-oxopentanoate + H2O. The protein operates within amino-acid biosynthesis; L-isoleucine biosynthesis; L-isoleucine from 2-oxobutanoate: step 3/4. It functions in the pathway amino-acid biosynthesis; L-valine biosynthesis; L-valine from pyruvate: step 3/4. Functionally, functions in the biosynthesis of branched-chain amino acids. Catalyzes the dehydration of (2R,3R)-2,3-dihydroxy-3-methylpentanoate (2,3-dihydroxy-3-methylvalerate) into 2-oxo-3-methylpentanoate (2-oxo-3-methylvalerate) and of (2R)-2,3-dihydroxy-3-methylbutanoate (2,3-dihydroxyisovalerate) into 2-oxo-3-methylbutanoate (2-oxoisovalerate), the penultimate precursor to L-isoleucine and L-valine, respectively. The protein is Dihydroxy-acid dehydratase 1 of Pseudoalteromonas translucida (strain TAC 125).